A 178-amino-acid chain; its full sequence is Large ribosomal subunit protein uL6 (178 aa).

The protein belongs to the universal ribosomal protein uL6 family. Part of the 50S ribosomal subunit.

In terms of biological role, this protein binds to the 23S rRNA, and is important in its secondary structure. It is located near the subunit interface in the base of the L7/L12 stalk, and near the tRNA binding site of the peptidyltransferase center. This chain is Large ribosomal subunit protein uL6, found in Natranaerobius thermophilus (strain ATCC BAA-1301 / DSM 18059 / JW/NM-WN-LF).